Reading from the N-terminus, the 505-residue chain is Deoxyguanosinetriphosphate triphosphohydrolase (505 aa).

In terms of domain architecture, HD spans 66-273; that stretch reads RLTHSMEVQQ…MEAADDISYC (208 aa).

This sequence belongs to the dGTPase family. Type 1 subfamily. Homotetramer. Mg(2+) serves as cofactor.

It carries out the reaction dGTP + H2O = 2'-deoxyguanosine + triphosphate + H(+). With respect to regulation, inhibited by the action of reducing agents such as dithiothreitol and 2-mercaptoethanol. Its function is as follows. dGTPase preferentially hydrolyzes dGTP over the other canonical NTPs. The protein is Deoxyguanosinetriphosphate triphosphohydrolase of Shigella boydii.